Reading from the N-terminus, the 96-residue chain is MNIRPLHDRVIVKRLEVESKSAGGIVLTGSAAEKSTRGKILAVGNGRISENGTVTPLDVKVGDVVIFNEGYGVKKEKIDGEEVLILSEADLMAVVG.

The protein belongs to the GroES chaperonin family. As to quaternary structure, heptamer of 7 subunits arranged in a ring. Interacts with the chaperonin GroEL.

Its subcellular location is the cytoplasm. Functionally, together with the chaperonin GroEL, plays an essential role in assisting protein folding. The GroEL-GroES system forms a nano-cage that allows encapsulation of the non-native substrate proteins and provides a physical environment optimized to promote and accelerate protein folding. GroES binds to the apical surface of the GroEL ring, thereby capping the opening of the GroEL channel. The protein is Co-chaperonin GroES of Shewanella frigidimarina (strain NCIMB 400).